The following is a 494-amino-acid chain: Amidophosphoribosyltransferase (494 aa).

A propeptide spanning residues M1–E10 is cleaved from the precursor. C11 (nucleophile) is an active-site residue. Positions C11–K231 constitute a Glutamine amidotransferase type-2 domain. Mg(2+)-binding residues include S294, D356, and D357.

In the C-terminal section; belongs to the purine/pyrimidine phosphoribosyltransferase family. Mg(2+) serves as cofactor.

The catalysed reaction is 5-phospho-beta-D-ribosylamine + L-glutamate + diphosphate = 5-phospho-alpha-D-ribose 1-diphosphate + L-glutamine + H2O. It functions in the pathway purine metabolism; IMP biosynthesis via de novo pathway; N(1)-(5-phospho-D-ribosyl)glycinamide from 5-phospho-alpha-D-ribose 1-diphosphate: step 1/2. Functionally, catalyzes the formation of phosphoribosylamine from phosphoribosylpyrophosphate (PRPP) and glutamine. The chain is Amidophosphoribosyltransferase from Staphylococcus aureus (strain Mu50 / ATCC 700699).